Reading from the N-terminus, the 127-residue chain is Small ribosomal subunit protein uS13 (127 aa).

A disordered region spans residues 90–127 (RRHRQGLPVRGQRTRTNARTRRGRRVTVAGKKKAPSKK). Over residues 101–127 (QRTRTNARTRRGRRVTVAGKKKAPSKK) the composition is skewed to basic residues.

This sequence belongs to the universal ribosomal protein uS13 family. Part of the 30S ribosomal subunit. Forms a loose heterodimer with protein S19. Forms two bridges to the 50S subunit in the 70S ribosome.

In terms of biological role, located at the top of the head of the 30S subunit, it contacts several helices of the 16S rRNA. In the 70S ribosome it contacts the 23S rRNA (bridge B1a) and protein L5 of the 50S subunit (bridge B1b), connecting the 2 subunits; these bridges are implicated in subunit movement. Contacts the tRNAs in the A and P-sites. In Rippkaea orientalis (strain PCC 8801 / RF-1) (Cyanothece sp. (strain PCC 8801)), this protein is Small ribosomal subunit protein uS13.